The following is an 84-amino-acid chain: Exodeoxyribonuclease 7 small subunit (84 aa).

It belongs to the XseB family. In terms of assembly, heterooligomer composed of large and small subunits.

It localises to the cytoplasm. The enzyme catalyses Exonucleolytic cleavage in either 5'- to 3'- or 3'- to 5'-direction to yield nucleoside 5'-phosphates.. In terms of biological role, bidirectionally degrades single-stranded DNA into large acid-insoluble oligonucleotides, which are then degraded further into small acid-soluble oligonucleotides. In Yersinia enterocolitica serotype O:8 / biotype 1B (strain NCTC 13174 / 8081), this protein is Exodeoxyribonuclease 7 small subunit.